The primary structure comprises 660 residues: RalBP1-associated Eps domain-containing protein 2 (660 aa).

An EH 1 domain is found at 34–147 (EQQCYSELFA…RFMMSKNDGE (114 aa)). Residues 169–208 (EKNSFKRMDDEDKQQETQSPTMSPLASPPSSPPHYQRVPL) are disordered. At S254 the chain carries Phosphoserine. The EH 2 domain maps to 282–373 (QREYYVNQFR…LQPEYLQAAF (92 aa)). An EF-hand domain is found at 315 to 350 (LSIPELSYIWELSDADCDGALTLPEFCAAFHLIVAR). D328, D330, D332, and E339 together coordinate Ca(2+). The interval 433-616 (NEALPKDVSE…KQKKAIQTAI (184 aa)) is disordered. T479 carries the phosphothreonine modification. Residue S493 is modified to Phosphoserine. A compositionally biased stretch (pro residues) spans 512 to 523 (LPPPPALPPRPC). The tract at residues 514–660 (PPPALPPRPC…LEQLRPVTVL (147 aa)) is interaction with RALBP1. The tract at residues 561 to 660 (PPSKPIRRKF…LEQLRPVTVL (100 aa)) is interaction with ASAP1. Low complexity predominate over residues 582–594 (PSTAASGPASAAT). A coiled-coil region spans residues 601–657 (VQKQSSKQKKAIQTAIRKNKEANAVLARLNSELQQQLKEVHQERIALENQLEQLRPV).

As to quaternary structure, interacts with EPN1; the interaction is direct. Interacts with EPS15; the interaction is direct. Interacts with EPS15L1. Interacts with RALBP1; can form a ternary complex with activated Ral (RALA or RALB). Interacts with ASAP1; the interaction is direct and this complex can bind paxillin. Also forms a ternary complex with RALBP1 and ASAP1. Interacts with GRB2. Post-translationally, tyrosine-phosphorylated upon stimulation of cells with EGF. Phosphorylation on Tyr-residues induces its association with the EGF receptor probably indirectly through an adapter like GRB2. As to expression, expressed at high levels in the cerebrum, cerebellum, lung, kidney, and testis. Weakly expressed in the kidney. Isoform 2 is down-regulated during progression of prostate cancer.

It localises to the cytoplasm. Involved in ligand-dependent receptor mediated endocytosis of the EGF and insulin receptors as part of the Ral signaling pathway. By controlling growth factor receptors endocytosis may regulate cell survival. Through ASAP1 may regulate cell adhesion and migration. The chain is RalBP1-associated Eps domain-containing protein 2 (REPS2) from Homo sapiens (Human).